The chain runs to 292 residues: ATP synthase subunit a (292 aa).

A run of 7 helical transmembrane segments spans residues 39–59, 73–93, 102–122, 128–148, 172–192, 196–216, and 231–251; these read QILGIFIVFVLLLTFFIFYKL, FLLLFQMLFVWVQDTTADLLG, YFLMLLLYIVSSNLVSLLGGI, SLTFTFSLGLATFIGIVVMGI, TFIPNPFSILSGFAPLFSISL, GNILAGTVILALFYNFWIFIF, and VFAGLITPVLHIYFDVIAGVL.

This sequence belongs to the ATPase A chain family. F-type ATPases have 2 components, CF(1) - the catalytic core - and CF(0) - the membrane proton channel. CF(1) has five subunits: alpha(3), beta(3), gamma(1), delta(1), epsilon(1). CF(0) has three main subunits: a(1), b(2) and c(9-12). The alpha and beta chains form an alternating ring which encloses part of the gamma chain. CF(1) is attached to CF(0) by a central stalk formed by the gamma and epsilon chains, while a peripheral stalk is formed by the delta and b chains.

It is found in the cell membrane. In terms of biological role, key component of the proton channel; it plays a direct role in the translocation of protons across the membrane. The protein is ATP synthase subunit a of Mycoplasma genitalium (strain ATCC 33530 / DSM 19775 / NCTC 10195 / G37) (Mycoplasmoides genitalium).